The chain runs to 209 residues: Ribosomal RNA large subunit methyltransferase E (209 aa).

S-adenosyl-L-methionine-binding residues include Gly-63, Trp-65, Asp-83, Asp-99, and Asp-124. The active-site Proton acceptor is the Lys-164.

It belongs to the class I-like SAM-binding methyltransferase superfamily. RNA methyltransferase RlmE family.

The protein localises to the cytoplasm. The catalysed reaction is uridine(2552) in 23S rRNA + S-adenosyl-L-methionine = 2'-O-methyluridine(2552) in 23S rRNA + S-adenosyl-L-homocysteine + H(+). Functionally, specifically methylates the uridine in position 2552 of 23S rRNA at the 2'-O position of the ribose in the fully assembled 50S ribosomal subunit. In Shewanella woodyi (strain ATCC 51908 / MS32), this protein is Ribosomal RNA large subunit methyltransferase E.